Consider the following 206-residue polypeptide: Heat shock protein beta-1 (206 aa).

Arg-12 carries the post-translational modification Omega-N-methylarginine. Ser-13 is modified (phosphoserine). Ser-15 carries the phosphoserine; by MAPKAPK2 and MAPKAPK3 modification. Phosphoserine is present on Ser-27. Positions 74-206 (RPAFSRALNR…GPESEQSGAK (133 aa)) are interaction with TGFB1I1. Residues 80-188 (ALNRQLSSGV…QSAEITIPVT (109 aa)) form the sHSP domain. Ser-86 carries the phosphoserine; by MAPKAPK2, MAPKAPK3 and MAPKAPK5 modification. Phosphoserine occurs at positions 87, 90, and 102. Lys-127 is modified (N6-acetyllysine). Thr-178 carries the phosphothreonine modification. Ser-180 and Ser-200 each carry phosphoserine.

This sequence belongs to the small heat shock protein (HSP20) family. In terms of assembly, homooligomer. Homodimer; becomes monomeric upon activation. Heterooligomer; with HSPB6. Associates with alpha- and beta-tubulin. Interacts with TGFB1I1. Interacts with CRYAB. Interacts with HSPB8. Interacts with HSPBAP1. Post-translationally, phosphorylated upon exposure to protein kinase C activators and heat shock. Phosphorylation by MAPKAPK2 and MAPKAPK3 in response to stress dissociates HSPB1 from large small heat-shock protein (sHsps) oligomers and impairs its chaperone activity and ability to protect against oxidative stress effectively. Phosphorylation by MAPKAPK5 in response to PKA stimulation induces F-actin rearrangement. In terms of tissue distribution, expressed in a variety of tissues. High levels in lung, adrenal, xiphoid, adipose tissue, heart and striated and smooth muscle, lower levels in the CNS. Adult levels are much higher in the slow-twitch soleus muscle than in the fast-twitch rectus femoris and extensor digitorum muscles.

It localises to the cytoplasm. The protein resides in the nucleus. Its subcellular location is the cytoskeleton. The protein localises to the spindle. In terms of biological role, small heat shock protein which functions as a molecular chaperone probably maintaining denatured proteins in a folding-competent state. Plays a role in stress resistance and actin organization. Through its molecular chaperone activity may regulate numerous biological processes including the phosphorylation and the axonal transport of neurofilament proteins. The chain is Heat shock protein beta-1 (Hspb1) from Rattus norvegicus (Rat).